Here is a 37-residue protein sequence, read N- to C-terminus: Large ribosomal subunit protein bL36 (37 aa).

The protein belongs to the bacterial ribosomal protein bL36 family.

This is Large ribosomal subunit protein bL36 from Deinococcus geothermalis (strain DSM 11300 / CIP 105573 / AG-3a).